A 293-amino-acid polypeptide reads, in one-letter code: 33 kDa chaperonin (293 aa).

Disulfide bonds link C239-C241 and C272-C275.

Belongs to the HSP33 family. In terms of processing, under oxidizing conditions two disulfide bonds are formed involving the reactive cysteines. Under reducing conditions zinc is bound to the reactive cysteines and the protein is inactive.

It localises to the cytoplasm. Functionally, redox regulated molecular chaperone. Protects both thermally unfolding and oxidatively damaged proteins from irreversible aggregation. Plays an important role in the bacterial defense system toward oxidative stress. This Limosilactobacillus fermentum (strain NBRC 3956 / LMG 18251) (Lactobacillus fermentum) protein is 33 kDa chaperonin.